The following is a 504-amino-acid chain: Putative pentatricopeptide repeat-containing protein At3g28640 (504 aa).

PPR repeat units follow at residues Asn-77–Glu-107, Ser-115–Leu-149, Asp-151–Pro-181, Asp-182–Pro-216, Asp-217–Glu-251, Asp-253–Ser-287, Trp-288–Pro-319, Asp-320–Arg-350, and Lys-356–Ser-390. A type E motif region spans residues Val-391–Asp-470. Residues Gly-471–Leu-501 form a type E(+) motif region.

Belongs to the PPR family. PCMP-E subfamily.

This chain is Putative pentatricopeptide repeat-containing protein At3g28640 (PCMP-E79), found in Arabidopsis thaliana (Mouse-ear cress).